The primary structure comprises 66 residues: Large ribosomal subunit protein bL35 (66 aa).

The segment covering 1 to 15 (MSKMKTKSGAKKRFK) has biased composition (basic residues). Residues 1–35 (MSKMKTKSGAKKRFKLTASGKVKAGQAGKRHGMIK) are disordered.

This sequence belongs to the bacterial ribosomal protein bL35 family.

The protein is Large ribosomal subunit protein bL35 of Maricaulis maris (strain MCS10) (Caulobacter maris).